Reading from the N-terminus, the 137-residue chain is Large ribosomal subunit protein bL17 (137 aa).

The protein belongs to the bacterial ribosomal protein bL17 family. Part of the 50S ribosomal subunit. Contacts protein L32.

This chain is Large ribosomal subunit protein bL17, found in Bradyrhizobium sp. (strain ORS 278).